Consider the following 93-residue polypeptide: Large ribosomal subunit protein bL27 (93 aa).

A propeptide spanning residues 1–10 (MLLKLQIQLF) is cleaved from the precursor.

It belongs to the bacterial ribosomal protein bL27 family. In terms of processing, the N-terminus is cleaved by ribosomal processing cysteine protease Prp.

This is Large ribosomal subunit protein bL27 from Phytoplasma australiense.